A 281-amino-acid chain; its full sequence is Ribosomal protein L11 methyltransferase (281 aa).

S-adenosyl-L-methionine contacts are provided by threonine 133, glycine 154, aspartate 175, and asparagine 216.

Belongs to the methyltransferase superfamily. PrmA family.

Its subcellular location is the cytoplasm. The enzyme catalyses L-lysyl-[protein] + 3 S-adenosyl-L-methionine = N(6),N(6),N(6)-trimethyl-L-lysyl-[protein] + 3 S-adenosyl-L-homocysteine + 3 H(+). Methylates ribosomal protein L11. The chain is Ribosomal protein L11 methyltransferase from Campylobacter jejuni subsp. jejuni serotype O:23/36 (strain 81-176).